The primary structure comprises 117 residues: Immunoglobulin kappa variable 1-39 (117 aa).

An N-terminal signal peptide occupies residues 1–22; that stretch reads MDMRVPAQLLGLLLLWLRGARC. The tract at residues 23-45 is framework-1; the sequence is DIQMTQSPSSLSASVGDRVTITC. The 94-residue stretch at 24–117 folds into the Ig-like domain; the sequence is IQMTQSPSSL…YYCQQSYSTP (94 aa). C45 and C110 are oxidised to a cystine. The segment at 46-56 is complementarity-determining-1; it reads RASQSISSYLN. A framework-2 region spans residues 57-71; it reads WYQQKPGKAPKLLIY. Residues 72–78 form a complementarity-determining-2 region; that stretch reads AASSLQS. A framework-3 region spans residues 79-110; sequence GVPSRFSGSGSGTDFTLTISSLQPEDFATYYC. The complementarity-determining-3 stretch occupies residues 111-117; the sequence is QQSYSTP.

Immunoglobulins are composed of two identical heavy chains and two identical light chains; disulfide-linked.

The protein resides in the secreted. It is found in the cell membrane. V region of the variable domain of immunoglobulin light chains that participates in the antigen recognition. Immunoglobulins, also known as antibodies, are membrane-bound or secreted glycoproteins produced by B lymphocytes. In the recognition phase of humoral immunity, the membrane-bound immunoglobulins serve as receptors which, upon binding of a specific antigen, trigger the clonal expansion and differentiation of B lymphocytes into immunoglobulins-secreting plasma cells. Secreted immunoglobulins mediate the effector phase of humoral immunity, which results in the elimination of bound antigens. The antigen binding site is formed by the variable domain of one heavy chain, together with that of its associated light chain. Thus, each immunoglobulin has two antigen binding sites with remarkable affinity for a particular antigen. The variable domains are assembled by a process called V-(D)-J rearrangement and can then be subjected to somatic hypermutations which, after exposure to antigen and selection, allow affinity maturation for a particular antigen. In Homo sapiens (Human), this protein is Immunoglobulin kappa variable 1-39.